Here is a 344-residue protein sequence, read N- to C-terminus: Phenylalanine--tRNA ligase alpha subunit (344 aa).

Glu259 serves as a coordination point for Mg(2+).

The protein belongs to the class-II aminoacyl-tRNA synthetase family. Phe-tRNA synthetase alpha subunit type 1 subfamily. Tetramer of two alpha and two beta subunits. Mg(2+) is required as a cofactor.

The protein resides in the cytoplasm. It catalyses the reaction tRNA(Phe) + L-phenylalanine + ATP = L-phenylalanyl-tRNA(Phe) + AMP + diphosphate + H(+). This is Phenylalanine--tRNA ligase alpha subunit from Nitrosospira multiformis (strain ATCC 25196 / NCIMB 11849 / C 71).